The chain runs to 558 residues: CTP synthase (558 aa).

The amidoligase domain stretch occupies residues 1–271 (MAARQQTKHL…DAYVVRRLGL (271 aa)). Residue S18 participates in CTP binding. Residue S18 coordinates UTP. ATP is bound by residues 19–24 (SLGKGL) and D76. Mg(2+)-binding residues include D76 and E145. CTP contacts are provided by residues 152-154 (DIE), 192-197 (KTKPTQ), and K228. UTP contacts are provided by residues 192–197 (KTKPTQ) and K228. The Glutamine amidotransferase type-1 domain occupies 296-545 (TIALVGKYVD…IRAALLHRCP (250 aa)). G359 serves as a coordination point for L-glutamine. Catalysis depends on C386, which acts as the Nucleophile; for glutamine hydrolysis. L-glutamine is bound by residues 387–390 (LGLQ), E410, and R471. Catalysis depends on residues H518 and E520.

It belongs to the CTP synthase family. Homotetramer.

It catalyses the reaction UTP + L-glutamine + ATP + H2O = CTP + L-glutamate + ADP + phosphate + 2 H(+). The enzyme catalyses L-glutamine + H2O = L-glutamate + NH4(+). The catalysed reaction is UTP + NH4(+) + ATP = CTP + ADP + phosphate + 2 H(+). Its pathway is pyrimidine metabolism; CTP biosynthesis via de novo pathway; CTP from UDP: step 2/2. Its activity is regulated as follows. Allosterically activated by GTP, when glutamine is the substrate; GTP has no effect on the reaction when ammonia is the substrate. The allosteric effector GTP functions by stabilizing the protein conformation that binds the tetrahedral intermediate(s) formed during glutamine hydrolysis. Inhibited by the product CTP, via allosteric rather than competitive inhibition. Its function is as follows. Catalyzes the ATP-dependent amination of UTP to CTP with either L-glutamine or ammonia as the source of nitrogen. Regulates intracellular CTP levels through interactions with the four ribonucleotide triphosphates. The chain is CTP synthase from Acidothermus cellulolyticus (strain ATCC 43068 / DSM 8971 / 11B).